Reading from the N-terminus, the 271-residue chain is Ferric vulnibactin reductase VuuB (271 aa).

One can recognise an FAD-binding FR-type domain in the interval 8 to 131 (VYPMLLDFVR…IGPAGPDPLI (124 aa)).

The protein belongs to the SIP oxidoreductase family. In terms of assembly, monomer. FAD is required as a cofactor.

The protein localises to the cytoplasm. It catalyses the reaction 2 a Fe(II)-siderophore + NAD(+) + H(+) = 2 a Fe(III)-siderophore + NADH. Ferric-siderophore reductase involved in iron removal from the siderophores after their transport into the cell. Acts as a major ferric-vulnibactin reductase catalyzing the reduction of Fe(3+)-vulnibactin, a catecholate siderophore synthesized by V.vulnificus. Catalyzes reduction of Fe(3+)-aerobactin, a citrate-hydroxamate siderophore produced by other bacteria, in the absence of IutB. Catalyzes reduction of Fe(3+)-vibriobactin in vitro. No activity with ferrioxamine B or Fe(3+)-enterobactin. Catalyzes reduction of ferric chelating compounds Fe(3+)-nitrilotriacetic acid (NTA), Fe(3+)-citrate and Fe(3+)-EDTA as well as non-complexed FeCl3 in the presence of NADH as its electron donor and FAD as its cofactor in vitro. Highest activity with Fe(3+)-NTA as electron acceptor. The polypeptide is Ferric vulnibactin reductase VuuB (Vibrio vulnificus).